The following is a 184-amino-acid chain: Ribosome-recycling factor (184 aa).

It belongs to the RRF family.

It is found in the cytoplasm. Functionally, responsible for the release of ribosomes from messenger RNA at the termination of protein biosynthesis. May increase the efficiency of translation by recycling ribosomes from one round of translation to another. This chain is Ribosome-recycling factor, found in Leptospira interrogans serogroup Icterohaemorrhagiae serovar copenhageni (strain Fiocruz L1-130).